The following is a 512-amino-acid chain: PTS system mannitol-specific EIICB component (512 aa).

Residues 1–28 lie on the Cytoplasmic side of the membrane; it reads MSQTEEKKGIGRRVQAFGSFLSSMIMPN. Residues 17-349 enclose the PTS EIIC type-2 domain; that stretch reads FGSFLSSMIM…MKFTREPKQD (333 aa). The chain crosses the membrane as a helical span at residues 29–50; it reads IGAFIAWGFIAAIFIDNGWLPN. The Extracellular segment spans residues 51–54; that stretch reads KDLA. A helical membrane pass occupies residues 55–75; sequence TLAGPMITYLIPLLIAFSGGR. Residues 76 to 139 lie on the Cytoplasmic side of the membrane; that stretch reads LIYDLRGGII…QGFEMLFNNF (64 aa). A helical membrane pass occupies residues 140 to 161; sequence SAGILGFIMTIAGFKILAPLMK. Over 162 to 170 the chain is Extracellular; sequence FIMHILSVA. Residues 171-191 traverse the membrane as a helical segment; the sequence is VEALVHAHLLPLVSILVEPAK. Topologically, residues 192–278 are cytoplasmic; the sequence is IVFLNNAINH…VLMRPLLFIA (87 aa). Residues 279 to 298 form a helical membrane-spanning segment; it reads VILGGMTGVATYQATGFGFK. Over 299–318 the chain is Extracellular; that stretch reads SPASPGSFIVYCLNAPRGEF. A helical membrane pass occupies residues 319 to 340; sequence LHMLLGVFLAALVSFVVAALIM. Over 341 to 512 the chain is Cytoplasmic; sequence KFTREPKQDL…LNNLKKDDQA (172 aa). The disordered stretch occupies residues 355–402; the sequence is AQMENTKGKKSSVASKLVSSDKNVNTEENASGNVSETSSSDDDPEALL. A compositionally biased stretch (low complexity) spans 365–376; sequence SSVASKLVSSDK. Residues 380–392 show a composition bias toward polar residues; sequence TEENASGNVSETS. The region spanning 419-512 is the PTS EIIB type-2 domain; the sequence is NHVIFACDAG…LNNLKKDDQA (94 aa). Catalysis depends on Cys-425, which acts as the Phosphocysteine intermediate; for EIIB activity. Position 425 is a phosphocysteine; by EIIA (Cys-425).

In terms of assembly, homodimer.

It is found in the cell membrane. The enzyme catalyses D-mannitol(out) + N(pros)-phospho-L-histidyl-[protein] = D-mannitol 1-phosphate(in) + L-histidyl-[protein]. The phosphoenolpyruvate-dependent sugar phosphotransferase system (sugar PTS), a major carbohydrate active transport system, catalyzes the phosphorylation of incoming sugar substrates concomitantly with their translocation across the cell membrane. The enzyme II CmtAB PTS system is involved in D-mannitol transport. This Staphylococcus aureus (strain COL) protein is PTS system mannitol-specific EIICB component (mtlA).